The primary structure comprises 317 residues: Melanocyte-stimulating hormone receptor (317 aa).

The Extracellular portion of the chain corresponds to 1 to 37 (MPVQGSQRRLLGSLNSTPTATPHLGLAANQTGARCLE). Asn29 is a glycosylation site (N-linked (GlcNAc...) asparagine). A helical transmembrane segment spans residues 38–63 (VSIPDGLFLSLGLVSLVENVLVVTAI). Over 64-72 (AKNRNLHSP) the chain is Cytoplasmic. The chain crosses the membrane as a helical span at residues 73–93 (MYCFICCLALSDLLVSGSNML). The Extracellular segment spans residues 94–118 (ETAVILLLEAGALAARAAVVQQLDN). Residues 119–140 (VIDVITCSSMLSSLCFLGAIAV) form a helical membrane-spanning segment. The Cytoplasmic portion of the chain corresponds to 141 to 163 (DRYISIFYALRYHSIVTLPRARR). A helical membrane pass occupies residues 164-183 (AVAAIWVASVLFSMLFIAYY). Residues 184–191 (DHAAVLLC) are Extracellular-facing. A helical membrane pass occupies residues 192–211 (LVVFFLAMLVLMAVLYVHML). At 212–240 (ARACQHAQGIARLHKRQRPAHQSFGLKGA) the chain is on the cytoplasmic side. A helical membrane pass occupies residues 241–266 (ATLTILLGIFFLCWGPFFLHLTLIVL). Residues 267–279 (CPQHPTCSCIFKN) lie on the Extracellular side of the membrane. A helical membrane pass occupies residues 280–300 (FNLFLTLIICNAIIDPLIYAF). Residues 301-317 (RSQELRRTLKEVLLCSW) are Cytoplasmic-facing. Cys315 carries S-palmitoyl cysteine lipidation.

The protein belongs to the G-protein coupled receptor 1 family. In terms of assembly, interacts with MGRN1, but does not undergo MGRN1-mediated ubiquitination; this interaction competes with GNAS-binding and thus inhibits agonist-induced cAMP production. Interacts with OPN3; the interaction results in a decrease in MC1R-mediated cAMP signaling and ultimately a decrease in melanin production in melanocytes.

Its subcellular location is the cell membrane. Functionally, receptor for MSH (alpha, beta and gamma) and ACTH. The activity of this receptor is mediated by G proteins which activate adenylate cyclase. Mediates melanogenesis, the production of eumelanin (black/brown) and phaeomelanin (red/yellow), via regulation of cAMP signaling in melanocytes. The polypeptide is Melanocyte-stimulating hormone receptor (MC1R) (Erythrocebus patas (Red guenon)).